The sequence spans 681 residues: Chaperone protein htpG (681 aa).

An a; substrate-binding region spans residues Met1–Arg326. The interval Ser327–Asn545 is b. The segment at Ile546–Ile681 is c.

The protein belongs to the heat shock protein 90 family. In terms of assembly, homodimer.

The protein localises to the cytoplasm. Its function is as follows. Molecular chaperone. Has ATPase activity. The sequence is that of Chaperone protein htpG from Bacteroides fragilis (strain YCH46).